The sequence spans 37 residues: Large ribosomal subunit protein bL36A (37 aa).

Belongs to the bacterial ribosomal protein bL36 family.

In Arthrobacter sp. (strain FB24), this protein is Large ribosomal subunit protein bL36A.